Consider the following 121-residue polypeptide: MSNEVDRMDVDEDESQNIAQSSNQSAPVETKKKRFEIKKWTAVAFWSWDIAVDNCAICRNHIMEPCIECQPKAMTDTDNECVAAWGVCNHAFHLHCINKWIKTRDACPLDNQPWQLARCGR.

The disordered stretch occupies residues 1–31 (MSNEVDRMDVDEDESQNIAQSSNQSAPVETK). Serine 15 bears the Phosphoserine mark. Positions 16–26 (QNIAQSSNQSA) are enriched in low complexity. Zn(2+) contacts are provided by cysteine 55, cysteine 58, cysteine 66, cysteine 69, cysteine 81, cysteine 88, histidine 90, histidine 93, histidine 95, cysteine 107, and aspartate 110. The RING-type zinc finger occupies 55–111 (CAICRNHIMEPCIECQPKAMTDTDNECVAAWGVCNHAFHLHCINKWIKTRDACPLDN).

It belongs to the RING-box family. As to quaternary structure, component of multiple cullin-RING ligases (CRLs) composed of 4 subunits: the RING protein HRT1, a cullin, a linker protein, and one of many alternative substrate receptors. Component of SCF E3 ubiquitin ligase complexes containing the cullin CDC53, the linker protein SKP1/CBF3D, and substrate receptors containing F-box motifs like DAS1 or GRR1. Component of RTT101(MMS1) E3 ubiquitin ligase complexes containing the cullin RTT101, the linker protein MMS1, and substrate receptors belonging to a protein family described as DCAF (DDB1- and CUL4-associated factor) like MMS22. Component of CRL3 E3 ubiquitin ligase complexes containing the cullin CUL3, the linker protein ELC1, and substrate receptors containing SOCS-box motifs like ELA1. Interacts with CDC53, CUL3, RTT101, CDC4 and CDC34/UBC3.

The protein localises to the cytoplasm. Its subcellular location is the nucleus. It functions in the pathway protein modification; protein ubiquitination. Its function is as follows. Core component of multiple cullin-RING-based E3 ubiquitin-protein ligase complexes (CRLs), which mediate the ubiquitination of target proteins. Recruits the E2 ubiquitin-conjugating enzyme CDC34/UBC3 to the complex and brings it into close proximity to the substrate. Also stimulates CDC34/UBC3 autoubiquitination and promotes the neddylation of CDC53 and RTT101. Component of the SCF(CDC4) ubiquitin ligase required for ubiquitination of the cyclin-dependent kinase inhibitor SIC1 and for the G1-to-S phase transition. Component of the RTT101(MMS1-MMS22) ubiquitin ligase that promotes fork progression through damaged DNA or natural pause sites. Component of the CRL3(ELA1) ubiquitin ligase required for ubiquitination of RPB1, the largest subunit of RNA polymerase II (Pol II), which targets Pol II for proteasomal degradation in DNA-damaged cells. In Saccharomyces cerevisiae (strain ATCC 204508 / S288c) (Baker's yeast), this protein is RING-box protein HRT1 (HRT1).